A 359-amino-acid polypeptide reads, in one-letter code: Nicotinate-nucleotide--dimethylbenzimidazole phosphoribosyltransferase (359 aa).

The Proton acceptor role is filled by E318.

It belongs to the CobT family. Homodimer.

The enzyme catalyses 5,6-dimethylbenzimidazole + nicotinate beta-D-ribonucleotide = alpha-ribazole 5'-phosphate + nicotinate + H(+). Its pathway is nucleoside biosynthesis; alpha-ribazole biosynthesis; alpha-ribazole from 5,6-dimethylbenzimidazole: step 1/2. Catalyzes the synthesis of alpha-ribazole-5'-phosphate from nicotinate mononucleotide (NAMN) and 5,6-dimethylbenzimidazole (DMB). In Escherichia coli O157:H7, this protein is Nicotinate-nucleotide--dimethylbenzimidazole phosphoribosyltransferase.